A 231-amino-acid chain; its full sequence is uncharacterized protein (231 aa).

7 helical membrane passes run 26-46 (TYSWMAAGLALTAGVAYLTAQ), 56-76 (SLRLPLMLAQLALVFVLSMFA), 84-104 (AGALFVGYAALTGLTFSALLF), 112-132 (ITAFAVSAGTFGLMSVAGFVI), 142-162 (FFLFAVLGLVVAMLVNLFVGS), 163-183 (SALSLGISMIGVFLFAGLTAY), and 206-226 (INGALALYLDFINIFLFLLNI).

The protein belongs to the BI1 family.

The protein resides in the cell membrane. This is an uncharacterized protein from Deinococcus radiodurans (strain ATCC 13939 / DSM 20539 / JCM 16871 / CCUG 27074 / LMG 4051 / NBRC 15346 / NCIMB 9279 / VKM B-1422 / R1).